The chain runs to 1237 residues: Glutamate receptor ionotropic, NMDA 2C (1237 aa).

The first 19 residues, 1-19, serve as a signal peptide directing secretion; that stretch reads MGGALGPALLLTSLLGAWA. Residues 20–554 lie on the Extracellular side of the membrane; that stretch reads RLGAGQGEQA…SAFLEPYSPA (535 aa). 2 N-linked (GlcNAc...) asparagine glycosylation sites follow: Asn-70 and Asn-73. The cysteines at positions 82 and 317 are disulfide-linked. Asn-337 and Asn-438 each carry an N-linked (GlcNAc...) asparagine glycan. 2 disulfides stabilise this stretch: Cys-426–Cys-453 and Cys-433–Cys-454. The L-glutamate site is built by Ser-509, Thr-511, and Arg-516. Residue Asn-539 is glycosylated (N-linked (GlcNAc...) asparagine). The chain crosses the membrane as a helical span at residues 555–575; sequence VWVMMFVMCLTVVAITVFMFE. The Cytoplasmic portion of the chain corresponds to 576–601; the sequence is YFSPVSYNQNLTKGKKPGGPSFTIGK. A pore-forming region spans residues 601–620; that stretch reads KSVWLLWALVFNNSVPIENP. Positions 602-611 form an intramembrane region, discontinuously helical; that stretch reads SVWLLWALVF. Residues 612 to 622 lie on the Cytoplasmic side of the membrane; that stretch reads NNSVPIENPRG. Residues 623-644 form a helical membrane-spanning segment; the sequence is TTSKIMVLVWAFFAVIFLASYT. At 645–813 the chain is on the extracellular side; it reads ANLAAFMIQE…EVMSSKLDID (169 aa). Asn-685 carries an N-linked (GlcNAc...) asparagine glycan. Residues Ser-687, Thr-688, and Asp-729 each contribute to the L-glutamate site. Cys-743 and Cys-798 are oxidised to a cystine. A helical membrane pass occupies residues 814–833; sequence NMAGVFYMLLVAMGLALLVF. Topologically, residues 834 to 1237 are cytoplasmic; that stretch reads AWEHLVYWKL…RRVSSLESEV (404 aa). Ser-875, Ser-881, and Ser-912 each carry phosphoserine. Polar residues predominate over residues 907 to 925; the sequence is ADVSSSLDRATRTIENWGN. The segment at 907–990 is disordered; it reads ADVSSSLDRA…LPDVSRPSCR (84 aa). Low complexity predominate over residues 930–941; that stretch reads PAPTASGPRSST. The segment covering 968–982 has biased composition (pro residues); that stretch reads PQPPARPATCGPPLP. The PDZ-binding motif lies at 1235–1237; the sequence is SEV.

The protein belongs to the glutamate-gated ion channel (TC 1.A.10.1) family. NR2C/GRIN2C subfamily. As to quaternary structure, heterotetramer. Forms heterotetrameric channels composed of two GluN1/zeta subunits (GRIN1), and two identical GluN2/epsilon subunits (GRIN2A, GRIN2B, GRIN2C or GRIN2D) or GluN3 subunits (GRIN3A or GRIN3B) (in vitro). In vivo, the subunit composition may depend on the expression levels of the different subunits. Interacts with PDZ domains of PATJ and DLG4. Interacts (via PDZ-binding motif) with SNX27 (via PDZ domain); the interaction is required for recycling to the plasma membrane when endocytosed and prevent degradation in lysosomes. Detected in cerebellum.

Its subcellular location is the cell membrane. It is found in the postsynaptic cell membrane. The enzyme catalyses Ca(2+)(in) = Ca(2+)(out). It catalyses the reaction Na(+)(in) = Na(+)(out). It carries out the reaction K(+)(in) = K(+)(out). Its function is as follows. Component of N-methyl-D-aspartate (NMDA) receptors (NMDARs) that function as heterotetrameric, ligand-gated cation channels with high calcium permeability and voltage-dependent block by Mg(2+). Participates in synaptic plasticity for learning and memory formation by contributing to the slow phase of excitatory postsynaptic current and long-term synaptic potentiation. Channel activation requires binding of the neurotransmitter L-glutamate to the GluN2 subunit, glycine or D-serine binding to the GluN1 subunit, plus membrane depolarization to eliminate channel inhibition by Mg(2+). NMDARs mediate simultaneously the potasium efflux and the influx of calcium and sodium. Each GluN2 subunit confers differential attributes to channel properties, including activation, deactivation and desensitization kinetics, pH sensitivity, Ca2(+) permeability, and binding to allosteric modulators. The protein is Glutamate receptor ionotropic, NMDA 2C of Rattus norvegicus (Rat).